The primary structure comprises 212 residues: KxDL motif-containing protein CG10681 (212 aa).

Residues 128 to 159 form a disordered region; the sequence is RSSLAEEAEDDTEAQAKKTAETPAPAAAKPVL. A compositionally biased stretch (low complexity) spans 148–157; the sequence is ETPAPAAAKP.

Belongs to the KXD1 family.

The chain is KxDL motif-containing protein CG10681 from Drosophila melanogaster (Fruit fly).